Reading from the N-terminus, the 616-residue chain is Chaperone protein HscA (616 aa).

Belongs to the heat shock protein 70 family.

Chaperone involved in the maturation of iron-sulfur cluster-containing proteins. Has a low intrinsic ATPase activity which is markedly stimulated by HscB. Involved in the maturation of IscU. In Cronobacter sakazakii (strain ATCC BAA-894) (Enterobacter sakazakii), this protein is Chaperone protein HscA.